The following is a 432-amino-acid chain: Enolase (432 aa).

Residue Gln167 coordinates (2R)-2-phosphoglycerate. Glu209 acts as the Proton donor in catalysis. Residues Asp246, Glu291, and Asp318 each coordinate Mg(2+). (2R)-2-phosphoglycerate-binding residues include Lys343, Arg372, Ser373, and Lys394. Lys343 (proton acceptor) is an active-site residue.

Belongs to the enolase family. As to quaternary structure, component of the RNA degradosome, a multiprotein complex involved in RNA processing and mRNA degradation. Mg(2+) serves as cofactor.

It localises to the cytoplasm. It is found in the secreted. Its subcellular location is the cell surface. It catalyses the reaction (2R)-2-phosphoglycerate = phosphoenolpyruvate + H2O. The protein operates within carbohydrate degradation; glycolysis; pyruvate from D-glyceraldehyde 3-phosphate: step 4/5. Functionally, catalyzes the reversible conversion of 2-phosphoglycerate (2-PG) into phosphoenolpyruvate (PEP). It is essential for the degradation of carbohydrates via glycolysis. This is Enolase from Colwellia psychrerythraea (strain 34H / ATCC BAA-681) (Vibrio psychroerythus).